A 401-amino-acid chain; its full sequence is Homeobox protein engrailed-1 (401 aa).

Disordered stretches follow at residues Met-1 to Gln-102, Gly-138 to Gly-167, Ser-229 to Pro-253, and Arg-293 to Pro-315. The segment covering Asp-13–Val-48 has biased composition (low complexity). Composition is skewed to pro residues over residues Ser-49–Pro-64 and Pro-73–Gln-88. Low complexity predominate over residues His-89–Gln-102. Composition is skewed to gly residues over residues Gly-138 to Ser-147 and Ser-234 to Gly-243. Positions Asp-312–Thr-371 form a DNA-binding region, homeobox.

It belongs to the engrailed homeobox family.

The protein resides in the nucleus. Required for proper formation of the apical ectodermal ridge and correct dorsal-ventral patterning in the limb. In Mus musculus (Mouse), this protein is Homeobox protein engrailed-1 (En1).